Here is a 419-residue protein sequence, read N- to C-terminus: UDP-N-acetylglucosamine 1-carboxyvinyltransferase (419 aa).

22–23 (KN) serves as a coordination point for phosphoenolpyruvate. Position 91 (R91) interacts with UDP-N-acetyl-alpha-D-glucosamine. C115 (proton donor) is an active-site residue. A 2-(S-cysteinyl)pyruvic acid O-phosphothioketal modification is found at C115. UDP-N-acetyl-alpha-D-glucosamine-binding positions include 120 to 124 (RPVDL), 160 to 163 (KVSV), D305, and V327.

This sequence belongs to the EPSP synthase family. MurA subfamily.

Its subcellular location is the cytoplasm. It carries out the reaction phosphoenolpyruvate + UDP-N-acetyl-alpha-D-glucosamine = UDP-N-acetyl-3-O-(1-carboxyvinyl)-alpha-D-glucosamine + phosphate. It participates in cell wall biogenesis; peptidoglycan biosynthesis. In terms of biological role, cell wall formation. Adds enolpyruvyl to UDP-N-acetylglucosamine. The protein is UDP-N-acetylglucosamine 1-carboxyvinyltransferase of Escherichia coli (strain K12 / MC4100 / BW2952).